Reading from the N-terminus, the 89-residue chain is Small ribosomal subunit protein bS20 (89 aa).

Belongs to the bacterial ribosomal protein bS20 family.

Binds directly to 16S ribosomal RNA. This is Small ribosomal subunit protein bS20 from Phenylobacterium zucineum (strain HLK1).